Here is a 344-residue protein sequence, read N- to C-terminus: Treponemal membrane protein A (344 aa).

An N-terminal signal peptide occupies residues 1–21 (MKLKSLVFSLSALFLVLGFTG). C22 carries N-palmitoyl cysteine lipidation. A lipid anchor (S-diacylglycerol cysteine) is attached at C22. A disordered region spans residues 257–344 (AAKTKQELSA…TEEPIEGGVQ (88 aa)). A compositionally biased stretch (basic and acidic residues) spans 260–277 (TKQELSAKLANEADKESP). Composition is skewed to acidic residues over residues 312–322 (VPVEEMNENSS) and 335–344 (TEEPIEGGVQ).

The protein to T.pallidum TmpA.

The protein resides in the cell membrane. The polypeptide is Treponemal membrane protein A (tmpA) (Treponema phagedenis).